A 378-amino-acid chain; its full sequence is UPF0754 membrane protein Bcer98_0694 (378 aa).

Residues 358–378 (LGALLGGTIGLMQGILLLFLM) form a helical membrane-spanning segment.

Belongs to the UPF0754 family.

It localises to the cell membrane. The chain is UPF0754 membrane protein Bcer98_0694 from Bacillus cytotoxicus (strain DSM 22905 / CIP 110041 / 391-98 / NVH 391-98).